A 96-amino-acid chain; its full sequence is Co-chaperonin GroES (96 aa).

This sequence belongs to the GroES chaperonin family. As to quaternary structure, heptamer of 7 subunits arranged in a ring. Interacts with the chaperonin GroEL.

Its subcellular location is the cytoplasm. Functionally, together with the chaperonin GroEL, plays an essential role in assisting protein folding. The GroEL-GroES system forms a nano-cage that allows encapsulation of the non-native substrate proteins and provides a physical environment optimized to promote and accelerate protein folding. GroES binds to the apical surface of the GroEL ring, thereby capping the opening of the GroEL channel. This chain is Co-chaperonin GroES, found in Histophilus somni (strain 129Pt) (Haemophilus somnus).